Consider the following 157-residue polypeptide: Phosphomannomutase (157 aa).

The active-site Phosphoserine intermediate is the serine 98. Serine 98 serves as a coordination point for Mg(2+).

The protein belongs to the phosphohexose mutase family. The cofactor is Mg(2+).

It catalyses the reaction alpha-D-mannose 1-phosphate = D-mannose 6-phosphate. It functions in the pathway nucleotide-sugar biosynthesis; GDP-alpha-D-mannose biosynthesis; alpha-D-mannose 1-phosphate from D-fructose 6-phosphate: step 2/2. It participates in capsule biogenesis; capsule polysaccharide biosynthesis. Functionally, involved in the biosynthesis of the K2 capsular polysaccharide biosynthesis. The chain is Phosphomannomutase (manB) from Klebsiella pneumoniae.